A 60-amino-acid polypeptide reads, in one-letter code: Large ribosomal subunit protein bL32 (60 aa).

It belongs to the bacterial ribosomal protein bL32 family.

The protein is Large ribosomal subunit protein bL32 of Pediococcus pentosaceus (strain ATCC 25745 / CCUG 21536 / LMG 10740 / 183-1w).